Consider the following 622-residue polypeptide: Low affinity potassium transport system protein Kup (622 aa).

Helical transmembrane passes span leucine 9–leucine 29, valine 49–leucine 69, valine 101–proline 121, proline 137–isoleucine 157, valine 165–valine 185, alanine 212–tyrosine 232, tryptophan 247–leucine 267, proline 276–alanine 296, isoleucine 337–phenylalanine 357, leucine 363–cysteine 383, alanine 397–valine 417, and isoleucine 419–threonine 439.

This sequence belongs to the HAK/KUP transporter (TC 2.A.72) family.

It is found in the cell inner membrane. The catalysed reaction is K(+)(in) + H(+)(in) = K(+)(out) + H(+)(out). Functionally, responsible for the low-affinity transport of potassium into the cell. Likely operates as a K(+):H(+) symporter. This chain is Low affinity potassium transport system protein Kup, found in Pectobacterium atrosepticum (strain SCRI 1043 / ATCC BAA-672) (Erwinia carotovora subsp. atroseptica).